We begin with the raw amino-acid sequence, 169 residues long: X polypeptide (169 aa).

The protein belongs to the IagB/IpgF/P19 family.

This is X polypeptide (X) from Escherichia coli.